A 428-amino-acid chain; its full sequence is Sarcosine reductase complex component B subunit alpha (428 aa).

Position 242 is a pyruvic acid (Cys) (Cys-242).

In terms of assembly, heterotetramer of two alpha and two beta subunits. Component of the sarcosine reductase complex, together with components A and C. PB is substrate specific. The peptide chain is cleaved into beta and alpha chains, and the alpha chain N-terminal cysteine is deaminated and oxidized to form a reactive pyruvoyl group.

It catalyses the reaction acetyl phosphate + methylamine + [thioredoxin]-disulfide + H2O = sarcosine + [thioredoxin]-dithiol + phosphate + H(+). Functionally, in the first step of sarcosine reductase, the substrate is bound to component PB via a Schiff base intermediate. Then the PB-activated substrate is nucleophilically attacked by the selenol anion of component PA to transform it to a carboxymethylated selenoether and the respective amine. By action of component PC, acetyl phosphate is formed, leaving component PA in its oxidized state. Finally component PA becomes reduced by the thioredoxin system to start a new catalytic cycle of reductive deamination. This Peptoclostridium acidaminophilum (Eubacterium acidaminophilum) protein is Sarcosine reductase complex component B subunit alpha (grdG).